Reading from the N-terminus, the 327-residue chain is Olfactory receptor 226 (327 aa).

Over 1 to 26 (MERRNHSGRVSEFVLLGFPAPAPLRV) the chain is Extracellular. Asn-5 is a glycosylation site (N-linked (GlcNAc...) asparagine). Residues 27-50 (LLFFLSLLAYVLVLTENMLIIIAI) form a helical membrane-spanning segment. Topologically, residues 51–58 (RNHPTLHK) are cytoplasmic. A helical membrane pass occupies residues 59-80 (PMYFFLANMSFLEIWYVTVTIP). At 81–104 (KMLAGFIGSKENHGQLISFEACMT) the chain is on the extracellular side. Cys-102 and Cys-194 are joined by a disulfide. The helical transmembrane segment at 105-125 (QLYFFLGLGCTECVLLAVMAY) threads the bilayer. Over 126-144 (DRYVAICHPLHYPVIVSSR) the chain is Cytoplasmic. Residues 145–163 (LCVQMAAGSWAGGFGISMV) form a helical membrane-spanning segment. Over 164–201 (KVFLISRLSYCGPNTINHFFCDVSPLLNLSCTDMSTAE) the chain is Extracellular. Residues 202-224 (LTDFVLAIFILLGPLSVTGASYM) form a helical membrane-spanning segment. Residues 225-241 (AITGAVMRIPSAAGRHK) are Cytoplasmic-facing. Residues 242–265 (AFSTCASHLTVVIIFYAASIFIYA) form a helical membrane-spanning segment. Residues 266 to 277 (RPKALSAFDTNK) lie on the Extracellular side of the membrane. A helical membrane pass occupies residues 278 to 297 (LVSVLYAVIVPLFNPIIYCL). Over 298–327 (RNQDVKRALRRTLHLAQDQEANTNKGSKNG) the chain is Cytoplasmic.

It belongs to the G-protein coupled receptor 1 family. As to expression, olfactory epithelium.

It localises to the cell membrane. Functionally, odorant receptor. This is Olfactory receptor 226 (Olr226) from Rattus norvegicus (Rat).